Consider the following 559-residue polypeptide: Leucine-rich repeat protein soc-2 (559 aa).

The span at 1 to 17 shows a compositional bias: basic and acidic residues; the sequence is METSKEFEFRPAKETSR. Residues 1–55 are disordered; it reads METSKEFEFRPAKETSRSKSPGGIVGRLSNFARNKARHSLSEKGSNSVGGSGGSG. LRR repeat units lie at residues 74–95, 97–118, 120–141, 143–164, 166–187, 189–210, 212–233, 235–257, 258–279, 281–302, 305–326, 329–350, 353–374, 376–397, 399–420, 422–443, 445–466, 468–489, 491–513, and 515–536; these read QDQRLDLSSIEITSIPSPIKEL, QLTELFLYKNKLTCLPTEIGQL, NLKKLGLSENALSSLPDSLSSL, SLETLDLRHNKLTEVPAVIYKI, SLETLWLRYNRIVAVDEQIGNL, KLKMLDVRENKIRELPSAIGKL, SLVVCLVSYNHLTRVPEEIGEC, ALTQLDLQHNDLSELPYSIGKLT, NLVRIGIRYNKIRCIPSELESC, QLEEFIVESNHLQLLPPNLLTM, KIHTVNLSRNELTAFPAGGPQQ, PTVTINMEHNQISKIPIGIFSK, RLTKLNLKENELVSLPLDMGSW, SITELNLSTNQLKVLPEDIEKL, NLEILVLSNNQLKKLPNQIGNL, KLRELDLEENELETVPTEIGFL, HLTKLWVQSNKIVTLPRSIGNL, SLQDLRLGENNLTAIPEEIGHL, SLKSLYLNDNSSLHNLPFELALC, and SLEIMSIENSPLSQIPPEITAG.

Belongs to the SHOC2 family. In terms of assembly, interacts with let-60.

In terms of biological role, acts as a Ras effector and participates in MAPK pathway activation. Probably acts as a scaffolding protein in a protein phosphatase complex that specifically dephosphorylates Raf kinase and stimulates Raf activity at specialized signaling complexes upon Ras activation. Required for vulval development. Involved in fluid homeostasis. Plays a role in nicotinic acetylcholine receptor (nAChR)-mediated sensitivity to nicotine. This Caenorhabditis briggsae protein is Leucine-rich repeat protein soc-2 (soc-2).